The sequence spans 149 residues: UPF0179 protein Mbar_A0292 (149 aa).

It belongs to the UPF0179 family.

This is UPF0179 protein Mbar_A0292 from Methanosarcina barkeri (strain Fusaro / DSM 804).